The sequence spans 315 residues: Beta-ketoacyl-[acyl-carrier-protein] synthase III 2 (315 aa).

Catalysis depends on residues cysteine 113 and histidine 241. The segment at 242–246 is ACP-binding; the sequence is QANLR. The active site involves asparagine 271.

The protein belongs to the thiolase-like superfamily. FabH family. As to quaternary structure, homodimer.

The protein localises to the cytoplasm. It catalyses the reaction malonyl-[ACP] + acetyl-CoA + H(+) = 3-oxobutanoyl-[ACP] + CO2 + CoA. It participates in lipid metabolism; fatty acid biosynthesis. Its function is as follows. Catalyzes the condensation reaction of fatty acid synthesis by the addition to an acyl acceptor of two carbons from malonyl-ACP. Catalyzes the first condensation reaction which initiates fatty acid synthesis and may therefore play a role in governing the total rate of fatty acid production. Possesses both acetoacetyl-ACP synthase and acetyl transacylase activities. Its substrate specificity determines the biosynthesis of branched-chain and/or straight-chain of fatty acids. The chain is Beta-ketoacyl-[acyl-carrier-protein] synthase III 2 from Streptomyces avermitilis (strain ATCC 31267 / DSM 46492 / JCM 5070 / NBRC 14893 / NCIMB 12804 / NRRL 8165 / MA-4680).